The primary structure comprises 495 residues: Mesoderm induction early response protein 1 (495 aa).

Disordered stretches follow at residues 1–25 (MAEP…FEPS) and 76–131 (GSTV…PSFT). Over residues 83–94 (GEEEEDEEDMDN) the composition is skewed to acidic residues. Residues 120-130 (QSSNDDPTPSF) are compositionally biased toward polar residues. The ELM2 domain maps to 171 to 269 (KEIMVGSMFQ…EALRRLRFNV (99 aa)). The region spanning 274–326 (EELSVWTEEECRNFEQGLKAYGKDFHLIQANKVRTRSVGECVAFYYMWKKSER) is the SANT domain. 2 disordered regions span residues 356 to 397 (DESE…NGVS) and 416 to 495 (HLNG…HGEV). Polar residues-rich tracts occupy residues 387–397 (TASNNTQNGVS) and 420–440 (PTIS…YNRE). Over residues 462–476 (TNERPIKRQRMDSPG) the composition is skewed to basic and acidic residues. Over residues 477–489 (KESTGSSEFSQEV) the composition is skewed to polar residues.

The protein localises to the nucleus. Functionally, transcriptional repressor regulating the expression of a number of genes. Probably functions through recruitment of histone deacetylases involved in chromatin silencing. This chain is Mesoderm induction early response protein 1 (mier1), found in Xenopus laevis (African clawed frog).